We begin with the raw amino-acid sequence, 410 residues long: MESEDYKRYEFKKALEELKDLHGRGTELISLYIPPDKQISDVVQYLREEYSTSSNIKSKSTRKNVLAAIESIMSRLKYYKQPPETGLVFFVGHIATRGDQTEMYTKIIEPPEPIQTFMYKCDSNFHLEQLESQLKEKDIYGLIVIDRKEATVGFLKGTRIEVVDYEQSLVPSKHHQGGQSSRRFERLIEIAANDFFKKIGEIANNAFMPLIKDINAVFIGGPGATKEYFLEKDYLRNEIKQKVKDLFDIGYTDESGLRELVEKASESIKDMKISREKDIINRFLREIKKPEGGLGVYGEDAIINALKSKNLDLLIISDTLKKRRYTYKCPVCNDTKTFTEKPRETPLCDKDNSEMELVDEDDLVEDLYKLADEAGTNVVFVSEDSDEGRLIKTAFGGLAGIMRYVPAIAP.

The protein belongs to the eukaryotic release factor 1 family. In terms of assembly, heterodimer of two subunits, one of which binds GTP.

Its subcellular location is the cytoplasm. Its function is as follows. Directs the termination of nascent peptide synthesis (translation) in response to the termination codons UAA, UAG and UGA. The polypeptide is Peptide chain release factor subunit 1 (Picrophilus torridus (strain ATCC 700027 / DSM 9790 / JCM 10055 / NBRC 100828 / KAW 2/3)).